The following is a 645-amino-acid chain: MESPAFSKPLKDKINPWGPLIIMGILVRAGASVQRDSPHQVFNVTWKITNLMTGQTANATSLLGTMTDTFPKLYFDLCDLVGDNWDDPEPDIGDGCRSPGGRKRTRLYDFYVCPGHTVLTGCGGPREGYCGKWGCETTGQAYWKPSSSWDLISLKRGNTPKGQGPCFDSSVGSGSIQGATPGGRCNPLVLEFTDAGKRASWDAPKTWGLRLYRSTGADPVTLFSLTRQVLNVGPRVPIGPNPVITEQLPPSQPVQIMLPRTPRPPPSGAASMVPGAPPPSQQPGTGDRLLNLVEGAYLALNLTSPDKTQECWLCLVSGPPYYEGVAVLGTYSNHTSAPANCSVTSQHKLTLSEVTGQGLCIGAVPKTHQALCNTTQKTSDGSYYLASPAGTIWACSTGLTPCLSTTVLNLTTDYCVLVELWPKVTYHSPNYVYGQFEKKTKYKREPVSLTLALLLGGLTMGGIAAGVGTGTTALVATKQFEQLQAAIHTDLGALEKSVSALEKSLTSLSEVVLQNRRGLDLLFLKEGGLCAALKEECCFYADHTGVVRDSMAKLRERLNQRQKLFESGQGWFEGLFNRSPWFTTLISTIMGPLIVLLLILLFGPCILNRLVQFVKDRISVVQALVLTQQYHQLKSIDPEEVESRE.

Positions 1 to 33 (MESPAFSKPLKDKINPWGPLIIMGILVRAGASV) are cleaved as a signal peptide. A receptor-binding domain (RBD) region spans residues 32 to 237 (SVQRDSPHQV…QVLNVGPRVP (206 aa)). The Extracellular portion of the chain corresponds to 34–585 (QRDSPHQVFN…FNRSPWFTTL (552 aa)). Asn43 and Asn58 each carry an N-linked (GlcNAc...) asparagine; by host glycan. Disulfide bonds link Cys113–Cys130 and Cys122–Cys135. Residues 260 to 285 (RTPRPPPSGAASMVPGAPPPSQQPGT) are disordered. An N-linked (GlcNAc...) asparagine; by host glycan is attached at Asn301. Disulfide bonds link Cys311/Cys314, Cys311/Cys538, Cys341/Cys395, Cys360/Cys372, Cys402/Cys415, and Cys530/Cys537. The CXXC motif lies at 311–314 (CWLC). 2 N-linked (GlcNAc...) asparagine; by host glycosylation sites follow: Asn333 and Asn340. Residues Asn373 and Asn409 are each glycosylated (N-linked (GlcNAc...) asparagine; by host). The interval 447–467 (VSLTLALLLGGLTMGGIAAGV) is fusion peptide. The stretch at 490-510 (DLGALEKSVSALEKSLTSLSE) forms a coiled coil. An immunosuppression region spans residues 513–529 (LQNRRGLDLLFLKEGGL). Positions 530-538 (CAALKEECC) match the CX6CC motif. A helical transmembrane segment spans residues 586–606 (ISTIMGPLIVLLLILLFGPCI). The S-palmitoyl cysteine; by host moiety is linked to residue Cys605. Residues 607–640 (LNRLVQFVKDRISVVQALVLTQQYHQLKSIDPEE) are Cytoplasmic-facing. The short motif at 630-633 (YHQL) is the YXXL motif; contains endocytosis signal element.

The mature envelope protein (Env) consists of a trimer of SU-TM heterodimers attached by a labile interchain disulfide bond. The activated Env consists of SU monomers and TM trimers. Specific enzymatic cleavages in vivo yield mature proteins. Envelope glycoproteins are synthesized as an inactive precursor that is N-glycosylated and processed likely by host cell furin or by a furin-like protease in the Golgi to yield the mature SU and TM proteins. The cleavage site between SU and TM requires the minimal sequence [KR]-X-[KR]-R. The R-peptide is released from the C-terminus of the cytoplasmic tail of the TM protein upon particle formation as a result of proteolytic cleavage by the viral protease. Cleavage of this peptide is required for TM to become fusogenic. In terms of processing, the CXXC motif is highly conserved across a broad range of retroviral envelope proteins. It is thought to participate in the formation of a labile disulfide bond possibly with the CX6CC motif present in the transmembrane protein. Isomerization of the intersubunit disulfide bond to an SU intrachain disulfide bond is thought to occur upon receptor recognition in order to allow membrane fusion. Post-translationally, the transmembrane protein is palmitoylated. The R-peptide is palmitoylated.

The protein resides in the virion membrane. Its subcellular location is the host cell membrane. Its function is as follows. The surface protein (SU) attaches the virus to the host cell by binding to its receptor. This interaction activates a thiol in a CXXC motif of the C-terminal domain, where the other Cys residue participates in the formation of the intersubunit disulfide. The activated thiol will attack the disulfide and cause its isomerization into a disulfide isomer within the motif. This leads to SU displacement and TM refolding, and is thought to activate its fusogenic potential by unmasking its fusion peptide. Fusion occurs at the host cell plasma membrane. The transmembrane protein (TM) acts as a class I viral fusion protein. Under the current model, the protein has at least 3 conformational states: pre-fusion native state, pre-hairpin intermediate state, and post-fusion hairpin state. During viral and target cell membrane fusion, the coiled coil regions (heptad repeats) assume a trimer-of-hairpins structure, positioning the fusion peptide in close proximity to the C-terminal region of the ectodomain. The formation of this structure appears to drive apposition and subsequent fusion of viral and target cell membranes. Membranes fusion leads to delivery of the nucleocapsid into the cytoplasm. This chain is Envelope glycoprotein (env), found in Homo sapiens (Human).